The primary structure comprises 344 residues: uncharacterized protein (344 aa).

This is an uncharacterized protein from Caenorhabditis elegans.